Consider the following 485-residue polypeptide: UDP-N-acetylmuramate--L-alanine ligase (485 aa).

Residue 129 to 135 (GTHGKTT) participates in ATP binding.

The protein belongs to the MurCDEF family.

Its subcellular location is the cytoplasm. It catalyses the reaction UDP-N-acetyl-alpha-D-muramate + L-alanine + ATP = UDP-N-acetyl-alpha-D-muramoyl-L-alanine + ADP + phosphate + H(+). It functions in the pathway cell wall biogenesis; peptidoglycan biosynthesis. Its function is as follows. Cell wall formation. This chain is UDP-N-acetylmuramate--L-alanine ligase, found in Vibrio campbellii (strain ATCC BAA-1116).